The primary structure comprises 66 residues: Beta-toxin ChFII.9 (66 aa).

The region spanning 1 to 66 (KEGYIVDYHT…VWPLPNKRCK (66 aa)) is the LCN-type CS-alpha/beta domain. 4 disulfides stabilise this stretch: Cys-12–Cys-65, Cys-16–Cys-41, Cys-25–Cys-46, and Cys-29–Cys-48. Lys-66 is modified (lysine amide).

As to expression, expressed by the venom gland.

The protein localises to the secreted. In terms of biological role, beta toxins bind voltage independently at site-4 of sodium channels (Nav) and shift the activation voltage toward more negative potentials, thereby affecting sodium channel activation CC and promoting spontaneous and repetitive firing. This chain is Beta-toxin ChFII.9, found in Centruroides hirsutipalpus (Scorpion).